We begin with the raw amino-acid sequence, 271 residues long: MSMHKALTIAGSDSSGGAGIQADLKTFQEKNVYGMTALTVIVAMDPNNSWNHQVFPIDTDTIRAQLATITDGIGVDAMKTGMLPTVDIIELAAKTIKEKQLKNVVIDPVMVCKGANEVLYPEHAQALREQLAPLATVITPNLFEASQLSGMDELKTVDDMIEAAKKIHALGAQYVVITGGGKLKHEKAVDVLYDGETAEVLESEMIDTPYTHGAGCTFSAAVTAELAKGAEVKEAIYAAKEFITAAIKESFPLNQYVGPTKHSALRLNQQS.

Asn-141 is a binding site for ATP. Glu-144 serves as a coordination point for Mg(2+). Residues 178–182 (TGGGK), Asp-190, Ile-206, Gly-215, and Lys-240 each bind ATP.

It belongs to the ThiD family. In terms of assembly, homodimer.

The catalysed reaction is pyridoxal + ATP = pyridoxal 5'-phosphate + ADP + H(+). In terms of biological role, phosphorylates B6 vitamers; functions in a salvage pathway. Uses pyridoxal, pyridoxine, and pyridoxamine as substrates. Can also use hydroxymethylpyrimidine (HMP) as substrate. This Bacillus subtilis (strain 168) protein is Pyridoxine kinase (pdxK).